Reading from the N-terminus, the 471-residue chain is Nitrosourea synthase (471 aa).

The segment at 177 to 328 is HO-like; it reads MWLVQFAPDF…GRMAREKIIK (152 aa). Residues glutamate 189, glutamate 215, histidine 225, glutamate 281, histidine 311, aspartate 315, histidine 318, histidine 407, histidine 409, and histidine 448 each coordinate Fe(2+). The segment at 397–459 is cupin; that stretch reads VEPRGELSNT…ANIESDECVY (63 aa).

As to quaternary structure, homodimer. Requires Fe(2+) as cofactor.

The catalysed reaction is N(omega)-methyl-L-arginine + 2 NADH + 3 O2 + H(+) = N(delta)-hydroxy-N(omega)-methyl-N(omega)-nitroso-L-citrulline + 2 NAD(+) + 3 H2O. It catalyses the reaction N(omega)-methyl-L-arginine + NADH + O2 + H(+) = N(delta)-hydroxy-N(omega)-methyl-L-arginine + NAD(+) + H2O. It carries out the reaction N(delta)-hydroxy-N(omega)-methyl-L-arginine + NADH + O2 = N(delta),N(omega')-dihydroxy-N(omega)-methyl-L-arginine + NAD(+) + H2O. The enzyme catalyses N(delta),N(omega')-dihydroxy-N(omega)-methyl-L-arginine + O2 = N(delta)-hydroxy-N(omega)-methyl-N(omega)-nitroso-L-citrulline + H2O. The catalysed reaction is 2 N(delta)-hydroxy-N(omega)-methyl-N(omega)-nitroso-L-citrulline + AH2 = 2 N(delta)-hydroxy-N(omega)-methyl-L-citrulline + 2 nitric oxide + A. The protein operates within antibiotic biosynthesis. In terms of biological role, involved in the biosynthesis of the glucosamine-nitrosourea antibiotic streptozotocin (SZN). Catalyzes a complex multi-step reaction: the overall reaction is an oxidative rearrangement of the guanidine group of N(omega)-methyl-L-arginine (L-NMA), generating an N-nitrosourea product. SznF first hydroxylates L-NMA to form N(delta)-hydroxy-N(omega)-methyl-L-arginine (L-HMA), which is further hydroxylated to give N(delta)-hydroxy-N(omega)-hydroxy-N(omega)-methyl-L-arginine (L-DHMA). Subsequently, an oxidative rearrangement converts this intermediate to N(delta)-hydroxy-N(omega)-methyl-N(omega)-nitroso-L-citrulline. This product is unstable, and degrades non-enzymically into nitric oxide and the denitrosated product N(delta)-hydroxy-N(omega)-methyl-L-citrulline. The polypeptide is Nitrosourea synthase (Streptomyces achromogenes subsp. streptozoticus).